The chain runs to 193 residues: Holliday junction branch migration complex subunit RuvA (193 aa).

Residues 1 to 63 (MIHHLKGQLI…EDSHTLYGFA (63 aa)) form a domain I region. A domain II region spans residues 64–142 (EKSEREIFRL…KVLGDDEVFV (79 aa)). The tract at residues 143-145 (SQS) is flexible linker. The segment at 145 to 193 (SNTNKEEALSALEILGYNRRQAGKVVEKILKEDPESTVESIIKMALKKL) is domain III.

Belongs to the RuvA family. As to quaternary structure, homotetramer. Forms an RuvA(8)-RuvB(12)-Holliday junction (HJ) complex. HJ DNA is sandwiched between 2 RuvA tetramers; dsDNA enters through RuvA and exits via RuvB. An RuvB hexamer assembles on each DNA strand where it exits the tetramer. Each RuvB hexamer is contacted by two RuvA subunits (via domain III) on 2 adjacent RuvB subunits; this complex drives branch migration. In the full resolvosome a probable DNA-RuvA(4)-RuvB(12)-RuvC(2) complex forms which resolves the HJ.

It is found in the cytoplasm. The RuvA-RuvB-RuvC complex processes Holliday junction (HJ) DNA during genetic recombination and DNA repair, while the RuvA-RuvB complex plays an important role in the rescue of blocked DNA replication forks via replication fork reversal (RFR). RuvA specifically binds to HJ cruciform DNA, conferring on it an open structure. The RuvB hexamer acts as an ATP-dependent pump, pulling dsDNA into and through the RuvAB complex. HJ branch migration allows RuvC to scan DNA until it finds its consensus sequence, where it cleaves and resolves the cruciform DNA. This is Holliday junction branch migration complex subunit RuvA from Christiangramia forsetii (strain DSM 17595 / CGMCC 1.15422 / KT0803) (Gramella forsetii).